The primary structure comprises 266 residues: Glucosamine-6-phosphate deaminase (266 aa).

Asp72 functions as the Proton acceptor; for enolization step in the catalytic mechanism. Asp141 acts as the For ring-opening step in catalysis. His143 acts as the Proton acceptor; for ring-opening step in catalysis. The active-site For ring-opening step is Glu148.

It belongs to the glucosamine/galactosamine-6-phosphate isomerase family. NagB subfamily. In terms of assembly, homohexamer.

It carries out the reaction alpha-D-glucosamine 6-phosphate + H2O = beta-D-fructose 6-phosphate + NH4(+). Its pathway is amino-sugar metabolism; N-acetylneuraminate degradation; D-fructose 6-phosphate from N-acetylneuraminate: step 5/5. Its activity is regulated as follows. Allosterically activated by N-acetylglucosamine 6-phosphate (GlcNAc6P). In terms of biological role, catalyzes the reversible isomerization-deamination of glucosamine 6-phosphate (GlcN6P) to form fructose 6-phosphate (Fru6P) and ammonium ion. This Tolumonas auensis (strain DSM 9187 / NBRC 110442 / TA 4) protein is Glucosamine-6-phosphate deaminase.